The sequence spans 1206 residues: STE20-like serine/threonine-protein kinase (1206 aa).

Phosphoserine is present on S14. In terms of domain architecture, Protein kinase spans 34–292; it reads WEIIGELGDG…TSQLLQHPFV (259 aa). ATP-binding positions include 40–48 and K63; that span reads LGDGAFGKV. D155 serves as the catalytic Proton acceptor. T183 is modified (phosphothreonine). S189 carries the post-translational modification Phosphoserine. The tract at residues 308 to 352 is disordered; the sequence is KAEVTEEVEDGKEEDDDDETESALPIPANKRASSDLSIASSEEDK. The span at 312–328 shows a compositional bias: acidic residues; the sequence is TEEVEDGKEEDDDDETE. Residues S340, S341, S344, S347, S348, S354, and S372 each carry the phosphoserine modification. The segment at 364 to 440 is disordered; the sequence is SERTEHNTSG…ESQPDTEDQQ (77 aa). Composition is skewed to basic and acidic residues over residues 381-395 and 420-429; these read LSEK…KTVD and ENGREKKRPQ. Residues 468–492 are a coiled coil; sequence EEDRNEENQEIIENKLTQSEEIKDI. Disordered regions lie at residues 515–761 and 773–792; these read DNEV…SSSD and TKDS…KTLK. Basic and acidic residues predominate over residues 520-536; the sequence is FTKEETQEKLGKDDKTH. Phosphoserine occurs at positions 545 and 563. Positions 556 to 565 are enriched in polar residues; it reads TQKSAEQSQD. A compositionally biased stretch (basic and acidic residues) spans 584-609; it reads KATEGPEAHGAEEEPRSGERVEDKQL. The span at 634 to 643 shows a compositional bias: acidic residues; sequence EEPETDEVDQ. S645, S649, and S668 each carry phosphoserine. The span at 691 to 702 shows a compositional bias: low complexity; that stretch reads AEPQAPAASQAS. Residues 747 to 757 are compositionally biased toward polar residues; that stretch reads TDSGTGSTVEN. A phosphoserine mark is found at S776 and S778. T813 carries the post-translational modification Phosphothreonine. S817 carries the phosphoserine modification. Residues 825-1037 are a coiled coil; the sequence is LRRQELRELR…LKNRQTQERA (213 aa). Residues 874–909 enclose the UVR domain; the sequence is DQEIENLEKQQKQTIERLEQEHTNRLRDEAKRIKGE. Phosphothreonine is present on T1065. Residues 1077–1151 are a coiled coil; the sequence is AAQEEKRQKN…ELKEWREKLR (75 aa). The span at 1079–1099 shows a compositional bias: basic and acidic residues; the sequence is QEEKRQKNERMAQHQKHESQM. 2 disordered regions span residues 1079–1100 and 1181–1206; these read QEEK…SQMR and LNPS…AWAG. Residues 1181–1200 are compositionally biased toward polar residues; the sequence is LNPSAQSRGCLQTSHPSSTR.

Belongs to the protein kinase superfamily. STE Ser/Thr protein kinase family. STE20 subfamily. Proteolytically cleaved by caspase-3. In terms of processing, autophosphorylated.

It is found in the cytoplasm. It carries out the reaction L-seryl-[protein] + ATP = O-phospho-L-seryl-[protein] + ADP + H(+). The enzyme catalyses L-threonyl-[protein] + ATP = O-phospho-L-threonyl-[protein] + ADP + H(+). Its function is as follows. Mediates apoptosis and actin stress fiber dissolution. The protein is STE20-like serine/threonine-protein kinase (Slk) of Rattus norvegicus (Rat).